Reading from the N-terminus, the 392-residue chain is L-rhamnonate dehydratase (392 aa).

Substrate is bound by residues His-22 and Arg-48. Positions 214, 240, and 268 each coordinate Mg(2+). His-318 (proton acceptor) is an active-site residue. Glu-338 is a binding site for substrate.

This sequence belongs to the mandelate racemase/muconate lactonizing enzyme family. RhamD subfamily. In terms of assembly, homooctamer; tetramer of dimers. Requires Mg(2+) as cofactor.

The catalysed reaction is L-rhamnonate = 2-dehydro-3-deoxy-L-rhamnonate + H2O. Its function is as follows. Catalyzes the dehydration of L-rhamnonate to 2-keto-3-deoxy-L-rhamnonate (KDR). The protein is L-rhamnonate dehydratase of Burkholderia ambifaria (strain MC40-6).